Reading from the N-terminus, the 333-residue chain is Serine/threonine-protein phosphatase 4 catalytic subunit 1 (333 aa).

Residues 1–29 (MALAVADTQNETFARSESPTSGPSDQLST) form a disordered region. Residues 7–27 (DTQNETFARSESPTSGPSDQL) are compositionally biased toward polar residues. Mn(2+)-binding residues include D79, H81, D107, and N139. Catalysis depends on H140, which acts as the Proton donor. Positions 189 and 264 each coordinate Mn(2+). Position 333 is a leucine methyl ester (L333).

Belongs to the PPP phosphatase family. PP-4 (PP-X) subfamily. Serine/threonine-protein phosphatase 4 (PP4) occurs in different assemblies of the catalytic and one or more regulatory subunits. The regulatory subunits are likely to be ppfr-1, ppfr-2, ppfr-4 and smk-1. Interacts with mei-1. Mn(2+) is required as a cofactor. In terms of processing, methylation at the C-terminal Leu-333 is critical for interactions with regulatory subunits.

It localises to the cytoplasm. It is found in the cytoskeleton. The protein resides in the microtubule organizing center. The protein localises to the centrosome. It catalyses the reaction O-phospho-L-seryl-[protein] + H2O = L-seryl-[protein] + phosphate. It carries out the reaction O-phospho-L-threonyl-[protein] + H2O = L-threonyl-[protein] + phosphate. Its function is as follows. Protein phosphatase which plays an essential role in meiosis and in early embryonic mitosis. During spermatocyte meiosis and the first embryonic mitosis, regulates centrosome maturation, and thus spindle formation, by recruiting some of the components of the pericentriolar material (PCM). During oocyte meiosis I, regulates meiotic chromosome dynamics including synapsis-independent chromosome pairing, restriction of synapsis to homologous chromosomes, programmed DNA double-strand break initiation and crossover formation resulting in chiasma formation. During oocyte meiosis II and probably together with regulatory subunit ppfr-1, may regulate microtubule severing by dephosphorylating and activating mei-1, a component of the katanin microtubule severing complex. The sequence is that of Serine/threonine-protein phosphatase 4 catalytic subunit 1 (pph-4.1) from Caenorhabditis briggsae.